We begin with the raw amino-acid sequence, 331 residues long: Glucokinase (331 aa).

16–21 (GDIGGT) contributes to the ATP binding site.

It belongs to the bacterial glucokinase family.

Its subcellular location is the cytoplasm. The enzyme catalyses D-glucose + ATP = D-glucose 6-phosphate + ADP + H(+). In Pseudomonas aeruginosa (strain UCBPP-PA14), this protein is Glucokinase.